We begin with the raw amino-acid sequence, 200 residues long: Putative calcium-activated potassium channel subunit beta (200 aa).

At 1–19 the chain is on the cytoplasmic side; that stretch reads MLAKKLVTAQKRGETRALC. A helical transmembrane segment spans residues 20 to 40; it reads LGLGMVACSMMMYFFIGITIV. Over 41-166 the chain is Extracellular; it reads PFYTKSVWTT…LSRLYPPKGL (126 aa). The N-linked (GlcNAc...) asparagine glycan is linked to asparagine 89. A helical membrane pass occupies residues 167–187; it reads LFTFLWPTLMFTGGCLIIVLV. Topologically, residues 188–200 are cytoplasmic; that stretch reads KISQYFSVLSARQ.

It belongs to the KCNMB (TC 8.A.14.1) family. KCNMB1 subfamily. In terms of assembly, probably interacts with KCNMA1 tetramer.

Its subcellular location is the membrane. Probable regulatory subunit of the calcium activated potassium KCNMA1 (maxiK) channel that modulates the calcium sensitivity and gating kinetics of KCNMA1, thereby contributing to KCNMA1 channel diversity. Increases the apparent Ca(2+)/voltage sensitivity of the KCNMA1 channel. The sequence is that of Putative calcium-activated potassium channel subunit beta (KCNMB1) from Coturnix japonica (Japanese quail).